We begin with the raw amino-acid sequence, 103 residues long: MSYADSSRNAVLTNGGRTLRAECRNADGNWVTSELDLDTCIGNPNGFLGWGMQNFSHSSEDIKLEEGGRKLTCRPKTVDGGFRERQGIDLNRIQNVNGRLVFQ.

Belongs to the cyanovirin-N family.

In terms of biological role, mannose-binding lectin. This is Cyanovirin-N homolog from Tuber borchii (White truffle).